The following is an 875-amino-acid chain: Alanine--tRNA ligase (875 aa).

Positions 564, 568, 666, and 670 each coordinate Zn(2+).

Belongs to the class-II aminoacyl-tRNA synthetase family. The cofactor is Zn(2+).

The protein resides in the cytoplasm. It carries out the reaction tRNA(Ala) + L-alanine + ATP = L-alanyl-tRNA(Ala) + AMP + diphosphate. In terms of biological role, catalyzes the attachment of alanine to tRNA(Ala) in a two-step reaction: alanine is first activated by ATP to form Ala-AMP and then transferred to the acceptor end of tRNA(Ala). Also edits incorrectly charged Ser-tRNA(Ala) and Gly-tRNA(Ala) via its editing domain. In Mannheimia succiniciproducens (strain KCTC 0769BP / MBEL55E), this protein is Alanine--tRNA ligase.